Consider the following 124-residue polypeptide: uncharacterized protein (124 aa).

The protein belongs to the asfivirus H124R family.

It is found in the virion. This is an uncharacterized protein from Ornithodoros (relapsing fever ticks).